Here is an 845-residue protein sequence, read N- to C-terminus: Leucine--tRNA ligase (845 aa).

Residues 40–51 (PYPSGAGLHVGH) carry the 'HIGH' region motif. The 'KMSKS' region motif lies at 623–627 (KMSKS). Residue Lys-626 coordinates ATP.

The protein belongs to the class-I aminoacyl-tRNA synthetase family.

It localises to the cytoplasm. It catalyses the reaction tRNA(Leu) + L-leucine + ATP = L-leucyl-tRNA(Leu) + AMP + diphosphate. The protein is Leucine--tRNA ligase of Protochlamydia amoebophila (strain UWE25).